Consider the following 670-residue polypeptide: Transcriptional regulatory protein DOT6 (670 aa).

Residues 1–44 (MSISTSLNSASIHLSSMDTHPQLHSLTRQPHSSSTAMSKNEAQE) show a composition bias toward polar residues. A disordered region spans residues 1 to 78 (MSISTSLNSA…SKNPSSWDPQ (78 aa)). Residues 45-74 (SSPSLPASSSSSTSASASASSKNSSKNPSS) are compositionally biased toward low complexity. Positions 67-121 (NSSKNPSSWDPQDDLLLRHLKEVKKMGWKDISQYFPNRTPNACQFRWRRLKSGNL) constitute an HTH myb-type domain. The segment at residues 94–117 (WKDISQYFPNRTPNACQFRWRRLK) is a DNA-binding region (H-T-H motif). A compositionally biased stretch (basic residues) spans 226-242 (HHPHQHLHHHPHHKTLK). Disordered stretches follow at residues 226-250 (HHPH…SHSF), 293-332 (TTPS…NTSR), 406-436 (HSSS…CNPT), and 483-659 (ADML…NSPL). A phosphoserine mark is found at serine 245 and serine 247. Low complexity-rich tracts occupy residues 295–307 (PSSP…LLSS) and 316–332 (NWSR…NTSR). The span at 425-436 (SGHSMKSSCNPT) shows a compositional bias: polar residues. At serine 487 the chain carries Phosphoserine. A Phosphothreonine modification is found at threonine 489. At serine 491 the chain carries Phosphoserine. Positions 512-522 (DDDKGSDKEDV) are enriched in basic and acidic residues. 2 stretches are compositionally biased toward low complexity: residues 544-561 (SSNK…SSKD) and 587-598 (TITSDTSSSAAT). The span at 599 to 608 (MNRTPNSKNP) shows a compositional bias: polar residues. Positions 622 to 659 (ITPRPKPSSTTTSITTETTNNMINHSSSTTTTTNNSPL) are enriched in low complexity.

This sequence belongs to the DOT6 family. Component of the RPD3C(L) complex composed of at least ASH1, CTI6, DEP1, DOT6, PHO23, RPD3, RXT2, RXT3, SAP30, SDS3, SIN3, TOD6; UME1 and UME6.

The protein resides in the nucleus. Component of the RPD3 histone deacetylase complex RPD3C(L) responsible for the deacetylation of lysine residues on the N-terminal part of the core histones (H2A, H2B, H3 and H4). Histone deacetylation gives a tag for epigenetic repression and plays an important role in transcriptional regulation, cell cycle progression and developmental events. DOT6 binds to sequences containing the core CGATG, which resembles the PAC (Polymerase A and C) motif. This Saccharomyces cerevisiae (strain ATCC 204508 / S288c) (Baker's yeast) protein is Transcriptional regulatory protein DOT6 (DOT6).